Here is a 159-residue protein sequence, read N- to C-terminus: MTPRNPSNYDSLFDSSIFSSTLFSSSLYHSAFDCSFGISFTIQPPIEYIVLSKPCFFAITPLLTLRCNGIAWHDSLDMTIWVSTVTSLPISHCLIVSLSLSHAFPSLFYSALVLSCLSLLCLAFTPRIPFHLHSVVCSYFGRECLSPLFPSPYFTCHNG.

The next 4 membrane-spanning stretches (helical) occupy residues 22-42, 45-65, 80-100, and 104-124; these read LFSS…SFTI, PIEY…LLTL, IWVS…SLSL, and FPSL…CLAF.

It is found in the membrane. This is an uncharacterized protein from Schizosaccharomyces pombe (strain 972 / ATCC 24843) (Fission yeast).